Reading from the N-terminus, the 122-residue chain is Large ribosomal subunit protein bL12 (122 aa).

The protein belongs to the bacterial ribosomal protein bL12 family. In terms of assembly, homodimer. Part of the ribosomal stalk of the 50S ribosomal subunit. Forms a multimeric L10(L12)X complex, where L10 forms an elongated spine to which 2 to 4 L12 dimers bind in a sequential fashion. Binds GTP-bound translation factors.

In terms of biological role, forms part of the ribosomal stalk which helps the ribosome interact with GTP-bound translation factors. Is thus essential for accurate translation. This is Large ribosomal subunit protein bL12 from Bdellovibrio bacteriovorus (strain ATCC 15356 / DSM 50701 / NCIMB 9529 / HD100).